The primary structure comprises 265 residues: NADH dehydrogenase [ubiquinone] iron-sulfur protein 3, mitochondrial (265 aa).

The N-terminal 33 residues, 1-33 (MAALIRNLGARAAVAALSAKHVVPAAGSTALRM), are a transit peptide targeting the mitochondrion.

Belongs to the complex I 30 kDa subunit family. In terms of assembly, part of the mitochondrial membrane respiratory chain NADH dehydrogenase (Complex I). Interacts with sicily; interaction is stronger with unprocessed sicily protein.

The protein resides in the mitochondrion. It carries out the reaction a ubiquinone + NADH + 5 H(+)(in) = a ubiquinol + NAD(+) + 4 H(+)(out). Core subunit of the mitochondrial membrane respiratory chain NADH dehydrogenase (Complex I) that is believed to belong to the minimal assembly required for catalysis. Complex I functions in the transfer of electrons from NADH to the respiratory chain. The immediate electron acceptor for the enzyme is believed to be ubiquinone. This Drosophila melanogaster (Fruit fly) protein is NADH dehydrogenase [ubiquinone] iron-sulfur protein 3, mitochondrial.